A 309-amino-acid chain; its full sequence is Nucleoside kinase (309 aa).

Residues aspartate 16, glycine 42, and asparagine 46 each contribute to the substrate site. Glutamine 108 is an ATP binding site. Residues 110-112 and glutamine 166 contribute to the substrate site; that span reads SYF. ATP is bound by residues asparagine 189 and 217–223; that span reads KTYGKEG. Aspartate 249 lines the substrate pocket. Aspartate 249 acts as the Proton acceptor in catalysis.

This sequence belongs to the carbohydrate kinase PfkB family. As to quaternary structure, homodimer. Mg(2+) serves as cofactor.

Its function is as follows. Catalyzes the phosphorylation of a wide range of nucleosides to yield nucleoside monophosphates, using ATP, ITP or GTP as phosphate donor. This Methanothermobacter thermautotrophicus (strain ATCC 29096 / DSM 1053 / JCM 10044 / NBRC 100330 / Delta H) (Methanobacterium thermoautotrophicum) protein is Nucleoside kinase.